The sequence spans 361 residues: tRNA-specific 2-thiouridylase MnmA (361 aa).

Residues 8–15 and Met-34 contribute to the ATP site; that span reads GMSGGVDS. The segment at 94–96 is interaction with target base in tRNA; the sequence is NPD. Catalysis depends on Cys-99, which acts as the Nucleophile. Cys-99 and Cys-195 form a disulfide bridge. Gly-123 lines the ATP pocket. Positions 145-147 are interaction with tRNA; sequence KDQ. Cys-195 serves as the catalytic Cysteine persulfide intermediate. The interaction with tRNA stretch occupies residues 307-308; the sequence is RY.

This sequence belongs to the MnmA/TRMU family.

The protein localises to the cytoplasm. The enzyme catalyses S-sulfanyl-L-cysteinyl-[protein] + uridine(34) in tRNA + AH2 + ATP = 2-thiouridine(34) in tRNA + L-cysteinyl-[protein] + A + AMP + diphosphate + H(+). Functionally, catalyzes the 2-thiolation of uridine at the wobble position (U34) of tRNA, leading to the formation of s(2)U34. This Legionella pneumophila (strain Paris) protein is tRNA-specific 2-thiouridylase MnmA.